We begin with the raw amino-acid sequence, 138 residues long: Small ribosomal subunit protein uS8 (138 aa).

It belongs to the universal ribosomal protein uS8 family. Part of the 30S ribosomal subunit. Contacts proteins S5 and S12.

Functionally, one of the primary rRNA binding proteins, it binds directly to 16S rRNA central domain where it helps coordinate assembly of the platform of the 30S subunit. This is Small ribosomal subunit protein uS8 from Thermus aquaticus.